Consider the following 465-residue polypeptide: Gamma-aminobutyric acid receptor subunit alpha-6 (465 aa).

The N-terminal stretch at 1 to 19 is a signal peptide; that stretch reads MALLIAWVCVAVSIEKALG. At 20 to 243 the chain is on the extracellular side; the sequence is GQGDGGDLYS…FHLQRKMGYF (224 aa). Asn-31 carries N-linked (GlcNAc...) asparagine glycosylation. Arg-84 lines the 4-aminobutanoate pocket. N-linked (GlcNAc...) asparagine glycosylation is found at Asn-128 and Asn-141. Thr-147 provides a ligand contact to 4-aminobutanoate. Cys-156 and Cys-170 form a disulfide bridge. A helical membrane pass occupies residues 244–264; sequence MIQIYTPCIMTVILSQVSFWI. At 265–270 the chain is on the cytoplasmic side; that stretch reads NKESVP. A helical transmembrane segment spans residues 271-290; sequence ARTVFGITTVLTMTTLSISA. Over 291–304 the chain is Extracellular; the sequence is RHSLPKVSYATAMD. A helical transmembrane segment spans residues 305-325; that stretch reads WFIAVCFAFVFSALIEFAAVN. The Cytoplasmic segment spans residues 326–424; the sequence is YFTNLQTQRA…GTSKIDQYSR (99 aa). The tract at residues 392–415 is disordered; the sequence is NSASQCQPVSAPPPAPPAPPPVGG. Over residues 401-413 the composition is skewed to pro residues; that stretch reads SAPPPAPPAPPPV. The helical transmembrane segment at 425–445 threads the bilayer; that stretch reads ILFPVAFAGFNLVYWVVYLSK. Residues 446 to 465 lie on the Extracellular side of the membrane; it reads DTMEFFEPTAMHLRNDHQSN.

It belongs to the ligand-gated ion channel (TC 1.A.9) family. Gamma-aminobutyric acid receptor (TC 1.A.9.5) subfamily. GABRA6 sub-subfamily. In terms of assembly, heteropentamer, formed by a combination of alpha (GABRA1-6), beta (GABRB1-3), gamma (GABRG1-3), delta (GABRD), epsilon (GABRE), rho (GABRR1-3), pi (GABRP) and theta (GABRQ) chains, each subunit exhibiting distinct physiological and pharmacological properties. In terms of tissue distribution, expressed in brain, in cerebellar granule cells.

The protein localises to the postsynaptic cell membrane. The protein resides in the cell membrane. It catalyses the reaction chloride(in) = chloride(out). Alpha subunit of the heteropentameric ligand-gated chloride channel gated by gamma-aminobutyric acid (GABA), a major inhibitory neurotransmitter in the brain. GABA-gated chloride channels, also named GABA(A) receptors (GABAAR), consist of five subunits arranged around a central pore and contain GABA active binding site(s) located at the alpha and beta subunit interface(s). When activated by GABA, GABAARs selectively allow the flow of chloride anions across the cell membrane down their electrochemical gradient. This Gallus gallus (Chicken) protein is Gamma-aminobutyric acid receptor subunit alpha-6 (GABRA6).